Consider the following 328-residue polypeptide: MPLHNLTRFPRLEFIGAPTPLEYLPRFSDYLGREIFIKRDDVTPMAMGGNKLRKLEFLAADALREGADTLITAGAIQSNHVRQTAAVAAKLGLHCVALLENPIGTTAENYLTNGNRLLLNLFNTQIEMCDALTDPNAQLEELATRVEAQGFRPYVIPVGGSNALGALGYVESALEIAQQCEGAVNISSVVVASGSAGTHAGLAVGLEHLMPESELIGVTVSRSVADQLPKVVNLQQAIAKELELTASAEILLWDDYFAPGYGVPNDEGMEAVKLLARLEGILLDPVYTGKAMAGLIDGISQKRFKDEGPILFIHTGGAPALFAYHPHV.

An N6-(pyridoxal phosphate)lysine modification is found at K51.

The protein belongs to the ACC deaminase/D-cysteine desulfhydrase family. In terms of assembly, homodimer. The cofactor is pyridoxal 5'-phosphate.

The catalysed reaction is D-cysteine + H2O = hydrogen sulfide + pyruvate + NH4(+) + H(+). Functionally, catalyzes the alpha,beta-elimination reaction of D-cysteine and of several D-cysteine derivatives. It could be a defense mechanism against D-cysteine. This Shigella boydii serotype 18 (strain CDC 3083-94 / BS512) protein is D-cysteine desulfhydrase.